A 346-amino-acid chain; its full sequence is Outer membrane protein A (346 aa).

Residues 1–21 (MKKTAIAIAVALAGFATVAQA) form the signal peptide. The next 8 membrane-spanning stretches (beta stranded) occupy residues 27–37 (TWYTGAKLGWS), 55–66 (QLGAGAFGGYQV), 70–78 (VGFEMGYDW), 96–107 (QGVQLTAKLGYP), 112–120 (LDIYTRLGG), 142–151 (PVFAGGVEYA), 156–163 (IATRLEYQ), and 182–190 (MLSLGVSYR). The hinge-like stretch occupies residues 197 to 208 (APVVAPAPAPAP). Tandem repeats lie at residues 201 to 202 (AP), 203 to 204 (AP), 205 to 206 (AP), and 207 to 208 (AP). The interval 201–208 (APAPAPAP) is 4 X 2 AA tandem repeats of A-P. The OmpA-like domain maps to 210-338 (VQTKHFTLKS…RVEIEVKGIK (129 aa)). An intrachain disulfide couples Cys311 to Cys323.

The protein belongs to the outer membrane OOP (TC 1.B.6) superfamily. OmpA family. Monomer and homodimer.

Its subcellular location is the cell outer membrane. Functionally, with TolR probably plays a role in maintaining the position of the peptidoglycan cell wall in the periplasm. Acts as a porin with low permeability that allows slow penetration of small solutes; an internal gate slows down solute passage. In terms of biological role, required for conjugation with F-type plasmids; probably serves as the mating receptor on recipient cells. The protein is Outer membrane protein A of Escherichia coli O157:H7.